The following is a 142-amino-acid chain: Hemoglobin subunit alpha (142 aa).

The Globin domain maps to 2 to 142 (VLSAADKGNV…VSTVLTSKYR (141 aa)). Position 4 is a phosphoserine (S4). Residues K8 and K12 each carry the N6-succinyllysine modification. K17 carries the post-translational modification N6-acetyllysine; alternate. Residue K17 is modified to N6-succinyllysine; alternate. Y25 is modified (phosphotyrosine). S36 carries the post-translational modification Phosphoserine. The residue at position 41 (K41) is an N6-succinyllysine. S50 carries the phosphoserine modification. H59 contributes to the O2 binding site. H88 lines the heme b pocket. Position 103 is a phosphoserine (S103). Residue T109 is modified to Phosphothreonine. The residue at position 125 (S125) is a Phosphoserine. A phosphothreonine mark is found at T135 and T138. The residue at position 139 (S139) is a Phosphoserine.

This sequence belongs to the globin family. Heterotetramer of two alpha chains and two beta chains. In terms of tissue distribution, red blood cells.

Functionally, involved in oxygen transport from the lung to the various peripheral tissues. Its function is as follows. Hemopressin acts as an antagonist peptide of the cannabinoid receptor CNR1. Hemopressin-binding efficiently blocks cannabinoid receptor CNR1 and subsequent signaling. This chain is Hemoglobin subunit alpha (HBA), found in Bos taurus (Bovine).